A 101-amino-acid polypeptide reads, in one-letter code: Putative pterin-4-alpha-carbinolamine dehydratase (101 aa).

This sequence belongs to the pterin-4-alpha-carbinolamine dehydratase family.

The enzyme catalyses (4aS,6R)-4a-hydroxy-L-erythro-5,6,7,8-tetrahydrobiopterin = (6R)-L-erythro-6,7-dihydrobiopterin + H2O. The polypeptide is Putative pterin-4-alpha-carbinolamine dehydratase (Rhodopseudomonas palustris (strain BisA53)).